Consider the following 2035-residue polypeptide: Proline-rich protein 12 (2035 aa).

Disordered stretches follow at residues 210-280, 292-311, 329-584, and 645-685; these read GGGV…ERAL, RPAS…LQHY, CSPL…GAPG, and QAPS…GTPY. The span at 223–240 shows a compositional bias: pro residues; sequence QTPPYRPGPPDPPPPPRH. Residues 249-261 are compositionally biased toward low complexity; sequence ASSSAATAAEPSS. Residues 296-305 show a composition bias toward pro residues; the sequence is AQPPPPPPPA. Phosphoserine is present on residues Ser330 and Ser338. Residues 338–364 are compositionally biased toward low complexity; that stretch reads SPGAGEPSKGGPSGATAGAAGRATGPE. A compositionally biased stretch (gly residues) spans 365-377; the sequence is TAGGGAAGGGGGY. Low complexity-rich tracts occupy residues 408–429 and 437–455; these read STAT…AGKA and SQAY…QAYG. A compositionally biased stretch (pro residues) spans 476–487; it reads PPQPPSGPPPPG. Polar residues-rich tracts occupy residues 490 to 501 and 520 to 534; these read TCQSYSPDQLQG and GLPT…STGH. Residues 540-555 show a composition bias toward gly residues; that stretch reads GHGGGWGPSSLGGGGE. Ser648 bears the Phosphoserine mark. Gly residues predominate over residues 670–681; it reads GLGGSGGAGGAP. Phosphothreonine is present on Thr735. Disordered regions lie at residues 755-844, 851-870, 879-920, and 946-1061; these read AFLQ…PLQL, HGLE…SLEP, GALE…APRF, and EMFG…CSTK. Residues 830–841 are compositionally biased toward pro residues; the sequence is PQPPPPPPPPMP. Position 859 is a phosphoserine (Ser859). A compositionally biased stretch (pro residues) spans 1031 to 1046; sequence SAPPPPPPPPPPPPVS. Phosphoserine is present on residues Ser1070 and Ser1128. 4 disordered regions span residues 1112-1244, 1288-1355, 1367-1567, and 1662-1839; these read RRLP…DHNS, PLYQ…SPCK, TLPS…GEGI, and HRPP…PGRL. Positions 1190–1199 are enriched in basic residues; sequence KPRGRGRGRG. Positions 1200–1214 are enriched in basic and acidic residues; it reads RKAEEMGGTRLEPLK. Lys1214 carries the post-translational modification N6-acetyllysine. A Phosphothreonine modification is found at Thr1295. The residue at position 1299 (Ser1299) is a Phosphoserine. A compositionally biased stretch (pro residues) spans 1314-1329; the sequence is QPPPPTVPTVPHPAPS. A phosphoserine mark is found at Ser1372, Ser1373, and Ser1378. Pro residues predominate over residues 1449 to 1529; the sequence is PPTPPPAPTP…PPEEPPAPSP (81 aa). The span at 1535–1547 shows a compositional bias: basic and acidic residues; sequence PDARPLHLAKKQE. Thr1555 carries the post-translational modification Phosphothreonine. Residue Ser1562 is modified to Phosphoserine. The segment covering 1698–1709 has biased composition (basic and acidic residues); the sequence is ETPEKMTSEKPP. Residue Thr1699 is modified to Phosphothreonine. The segment covering 1710–1730 has biased composition (pro residues); sequence EPAPEPAVPEPPAPEKPSPPR. Basic and acidic residues predominate over residues 1731–1768; that stretch reads PVEKEKEKEKEKEKEKERVTRPLRSERATSGRQMRTDR. Residues 1769 to 1779 show a composition bias toward polar residues; that stretch reads SLATGQSTTSR. Over residues 1817-1828 the composition is skewed to low complexity; that stretch reads SSSDSESSPGAP. At Ser1924 the chain carries Phosphoserine.

As to expression, expressed in brain.

It localises to the nucleus. Its subcellular location is the postsynaptic density. The protein localises to the synapse. It is found in the synaptosome. This Mus musculus (Mouse) protein is Proline-rich protein 12.